The following is a 355-amino-acid chain: Blue-sensitive opsin (355 aa).

The Extracellular segment spans residues 1-36; that stretch reads MNGTEGINFYVPLSNKTGLVRSPFEYPQYYLAEPWK. N-linked (GlcNAc...) asparagine glycosylation is found at N2 and N15. The helical transmembrane segment at 37-61 threads the bilayer; it reads YKVVCCYIFFLIFTGLPINILTLLV. At 62 to 73 the chain is on the cytoplasmic side; that stretch reads TFKHKKLRQPLN. The helical transmembrane segment at 74–98 threads the bilayer; that stretch reads YILVNLAVADLFMACFGFTVTFYTA. The Extracellular segment spans residues 99-113; the sequence is WNGYFIFGPIGCAIE. A disulfide bridge connects residues C110 and C187. A helical membrane pass occupies residues 114 to 133; it reads GFFATLGGQVALWSLVVLAI. Residues 134–152 are Cytoplasmic-facing; sequence ERYIVVCKPMGNFRFSATH. The chain crosses the membrane as a helical span at residues 153–176; it reads ALMGISFTWFMSFSCAAPPLLGWS. At 177 to 202 the chain is on the extracellular side; that stretch reads RYIPEGMQCSCGPDYYTLNPDYHNES. N200 carries N-linked (GlcNAc...) asparagine glycosylation. Residues 203-230 form a helical membrane-spanning segment; it reads YVLYMFGVHFVIPVVVIFFSYGRLICKV. The Cytoplasmic segment spans residues 231-252; the sequence is REAAAQQQESASTQKAEREVTR. A helical transmembrane segment spans residues 253–276; that stretch reads MVILMVLGFLLAWTPYAMVAFWIF. Residues 277–284 lie on the Extracellular side of the membrane; the sequence is TNKGVDFS. The helical transmembrane segment at 285–309 threads the bilayer; sequence ATLMSVPAFFSKSSSLYNPIIYVLM. K296 is subject to N6-(retinylidene)lysine. Topologically, residues 310–355 are cytoplasmic; sequence NKQFRNCMITTICCGKNPFGDEDVSSSVSQSKTEVSSVSSSQVSPA. 2 S-palmitoyl cysteine lipidation sites follow: C322 and C323. A disordered region spans residues 332 to 355; it reads DVSSSVSQSKTEVSSVSSSQVSPA. Over residues 334–355 the composition is skewed to low complexity; that stretch reads SSSVSQSKTEVSSVSSSQVSPA.

Belongs to the G-protein coupled receptor 1 family. Opsin subfamily. Phosphorylated on some or all of the serine and threonine residues present in the C-terminal region.

It is found in the membrane. Its function is as follows. Visual pigments are the light-absorbing molecules that mediate vision. They consist of an apoprotein, opsin, covalently linked to cis-retinal. This opsin uses a vitamin A2 chromophore. The sequence is that of Blue-sensitive opsin from Anolis carolinensis (Green anole).